Consider the following 314-residue polypeptide: uncharacterized protein (314 aa).

The segment at 1–70 (MAGNSQRRGA…QGRHKKTDDT (70 aa)) is disordered. Basic residues predominate over residues 44–65 (RPHHPAGKRAAKAARQAQGRHK). G265, I285, and L294 together coordinate S-adenosyl-L-methionine.

Belongs to the class IV-like SAM-binding methyltransferase superfamily. RNA methyltransferase TrmH family.

This is an uncharacterized protein from Mycolicibacterium gilvum (strain PYR-GCK) (Mycobacterium gilvum (strain PYR-GCK)).